Here is a 597-residue protein sequence, read N- to C-terminus: Dynein intermediate chain 3, ciliary (597 aa).

WD repeat units follow at residues 159–210 (EIKR…KPEF), 213–253 (KPVS…QAVE), 260–301 (SHHD…EPTE), 314–354 (ENAQ…PPEK), 361–400 (EHIGPVYSLQRNPFFPKNFLTVGDWTARIWSEDIRDSSIM), 404–444 (YHMS…KDPT), and 449–488 (VSDDALHSLRVQDQGRLIATGSNSGTTTLLELSSGLCTMQ). 2 disordered regions span residues 512–546 (RQRELRLKRQGASAQGQDDDEEGGPDEEEDLVAAA) and 562–597 (AAQQAKLSEQDNKIIEEAEENNGSEKKDTENGEKEG). Over residues 528 to 542 (QDDDEEGGPDEEEDL) the composition is skewed to acidic residues. The span at 584–597 (GSEKKDTENGEKEG) shows a compositional bias: basic and acidic residues.

It belongs to the dynein intermediate chain family. Consists of at least two heavy chains (alpha and beta), three intermediate chains and several light chains.

It is found in the cytoplasm. It localises to the cytoskeleton. The protein resides in the cilium axoneme. Functionally, may play a role in the regulation of dynein heavy chain activity. This chain is Dynein intermediate chain 3, ciliary, found in Heliocidaris crassispina (Sea urchin).